A 113-amino-acid polypeptide reads, in one-letter code: U11-theraphotoxin-Hhn1n (113 aa).

The signal sequence occupies residues 1–21 (MNTVRVTFLLVFVLAVSLGQA). The propeptide occupies 22 to 74 (DKDENRMEMQEKTEQGKSYLDFAENLLLQKLEELEAKLLEEDSEESRNSRQKR). Positions 60–69 (LEEDSEESRN) are enriched in basic and acidic residues. The interval 60-83 (LEEDSEESRNSRQKRCIGEGVPCD) is disordered. 2 cysteine pairs are disulfide-bonded: Cys-75-Cys-90 and Cys-89-Cys-110.

This sequence belongs to the neurotoxin 14 (magi-1) family. 01 (HNTX-16) subfamily. Expressed by the venom gland.

Its subcellular location is the secreted. Probable ion channel inhibitor. The chain is U11-theraphotoxin-Hhn1n from Cyriopagopus hainanus (Chinese bird spider).